A 396-amino-acid chain; its full sequence is Tryptophan synthase beta chain (396 aa).

K86 carries the post-translational modification N6-(pyridoxal phosphate)lysine.

Belongs to the TrpB family. Tetramer of two alpha and two beta chains. Pyridoxal 5'-phosphate is required as a cofactor.

The enzyme catalyses (1S,2R)-1-C-(indol-3-yl)glycerol 3-phosphate + L-serine = D-glyceraldehyde 3-phosphate + L-tryptophan + H2O. The protein operates within amino-acid biosynthesis; L-tryptophan biosynthesis; L-tryptophan from chorismate: step 5/5. In terms of biological role, the beta subunit is responsible for the synthesis of L-tryptophan from indole and L-serine. This Aliivibrio salmonicida (strain LFI1238) (Vibrio salmonicida (strain LFI1238)) protein is Tryptophan synthase beta chain.